A 75-amino-acid chain; its full sequence is Large ribosomal subunit protein bL31 (75 aa).

It belongs to the bacterial ribosomal protein bL31 family. Type A subfamily. In terms of assembly, part of the 50S ribosomal subunit.

In terms of biological role, binds the 23S rRNA. This chain is Large ribosomal subunit protein bL31, found in Chlorobium phaeovibrioides (strain DSM 265 / 1930) (Prosthecochloris vibrioformis (strain DSM 265)).